The primary structure comprises 104 residues: ATP-dependent Clp protease adapter protein ClpS (104 aa).

It belongs to the ClpS family. Binds to the N-terminal domain of the chaperone ClpA.

In terms of biological role, involved in the modulation of the specificity of the ClpAP-mediated ATP-dependent protein degradation. In Bordetella avium (strain 197N), this protein is ATP-dependent Clp protease adapter protein ClpS.